Consider the following 277-residue polypeptide: Small ribosomal subunit protein mS23 (277 aa).

Disordered regions lie at residues 48–85 and 232–277; these read APSH…KKPS and LAAF…GPPI. The segment covering 244 to 269 has biased composition (acidic residues); the sequence is ESGESEDEIPLIEEEDAIGASEESET.

This sequence belongs to the mitochondrion-specific ribosomal protein mS23 family. In terms of assembly, component of the mitochondrial small ribosomal subunit.

The protein resides in the mitochondrion. This chain is Small ribosomal subunit protein mS23 (RSM25), found in Ajellomyces capsulatus (strain NAm1 / WU24) (Darling's disease fungus).